The chain runs to 541 residues: EH domain-containing protein 4 (541 aa).

Methionine 1 carries the post-translational modification N-acetylmethionine. The 232-residue stretch at 58–289 (FENKPMILLV…DLFRDIQSLP (232 aa)) folds into the Dynamin-type G domain. Residues 68-75 (GQYSTGKT) form a G1 motif region. 68–75 (GQYSTGKT) is an ATP binding site. The G2 motif stretch occupies residues 94 to 95 (EP). The interval 156-159 (DSPG) is G3 motif. Serine 162 bears the Phosphoserine mark. The interval 222–225 (NKAD) is G4 motif. Residue lysine 223 coordinates ATP. Valine 246 is a region of interest (G5 motif). Tryptophan 261 contacts ATP. Residues 447–535 (DKPVYDELFY…PHLVPPSHRK (89 aa)) enclose the EH domain. Tyrosine 451 carries the post-translational modification Phosphotyrosine. A Phosphoserine modification is found at serine 459. One can recognise an EF-hand domain in the interval 479–514 (LPNSVLGKIWKLADCDCDGMLDEEEFALAKHLIKIK). Ca(2+) is bound by residues aspartate 492, aspartate 494, aspartate 496, methionine 498, and glutamate 503.

Belongs to the TRAFAC class dynamin-like GTPase superfamily. Dynamin/Fzo/YdjA family. EHD subfamily. As to quaternary structure, homooligomer, and heterooligomer with EHD1, EHD2 and EHD3. Forms a complex with EHD4 and MICALL1; the complex controls CDH5 trafficking and coordinates angiogenesis. As to expression, highly expressed in pancreas and heart.

Its subcellular location is the early endosome membrane. It localises to the recycling endosome membrane. The protein resides in the cell membrane. It is found in the cell junction. The protein localises to the adherens junction. In terms of biological role, ATP- and membrane-binding protein that probably controls membrane reorganization/tubulation upon ATP hydrolysis. Plays a role in early endosomal transport. During sprouting angiogenesis, in complex with PACSIN2 and MICALL1, forms recycling endosome-like tubular structure at asymmetric adherens junctions to control CDH5 trafficking. This chain is EH domain-containing protein 4, found in Homo sapiens (Human).